We begin with the raw amino-acid sequence, 552 residues long: B-cell linker protein (552 aa).

The disordered stretch occupies residues 50–431 (TGKDTWDRLK…SSISSISSTA (382 aa)). Over residues 67-76 (PRRDYASEHA) the composition is skewed to basic and acidic residues. The span at 77–93 (DNEEEQWSDDFDSDYEN) shows a compositional bias: acidic residues. Phosphotyrosine; by SYK is present on residues tyrosine 91, tyrosine 103, tyrosine 115, tyrosine 194, tyrosine 205, and tyrosine 249. Residues 188-205 (SDDEDNYIVPVDNDDDNY) show a composition bias toward acidic residues. Basic and acidic residues-rich tracts occupy residues 277–295 (NAEHSHMHSMTRESPKLDA), 309–322 (PKTDHEANNNDENH), and 368–382 (NEDKPTAADRRRGSS). The SH2 domain occupies 442–549 (WYAATCDRKT…KDSTKLKYIV (108 aa)).

As to quaternary structure, associates with PLCG1, VAV1 and NCK1 in a B-cell antigen receptor-dependent fashion. Interacts through its SH2 domain with CD79A. Interacts with VAV3, PLCG2 and GRB2. Post-translationally, following BCR activation, phosphorylated on tyrosine residues by SYK and LYN. When phosphorylated, serves as a scaffold to assemble downstream targets of antigen activation, including PLCG1, VAV1, GRB2 and NCK1. Phosphorylation is required for both Ca(2+) and MAPK signaling pathways. Phosphorylation of Tyr-103, Tyr-194 and Tyr-205 facilitates PLCG1 binding. Phosphorylation of Tyr-115 facilitates BTK binding. Phosphorylation of Tyr-91 facilitates VAV1 and NCK1 binding. In terms of tissue distribution, highly expressed in the bursa, very low expression in ovary and spleen. Expression was variable among B-cell lines. Highly expressed in immature B-cell lines such as DT40 and CL18, low expression was seen in relatively mature B-cell lines, such as 293B9 and 249L4. No expression was seen in T-cell lines.

The protein localises to the cytoplasm. It localises to the cell membrane. Functionally, functions as a central linker protein, downstream of the B-cell receptor (BCR), bridging the SYK kinase to a multitude of signaling pathways and regulating biological outcomes of B-cell function and development. Plays a role in the activation of ERK/EPHB2, MAP kinase p38 and JNK. Modulates AP1 activation. Important for the activation of NF-kappa-B and NFAT. Plays an important role in BCR-mediated PLCG1 and PLCG2 activation and Ca(2+) mobilization and is required for trafficking of the BCR to late endosomes. However, does not seem to be required for pre-BCR-mediated activation of MAP kinase and phosphatidyl-inositol 3 (PI3) kinase signaling. May be required for the RAC1-JNK pathway. Plays a critical role in orchestrating the pro-B cell to pre-B cell transition. Plays a critical role in B-cell development in the bursa. Plays an important role in BCR-induced apoptosis. The protein is B-cell linker protein (BLNK) of Gallus gallus (Chicken).